The chain runs to 209 residues: Uracil phosphoribosyltransferase (209 aa).

Residues R79, R104, and 131–139 each bind 5-phospho-alpha-D-ribose 1-diphosphate; that span reads DPMLATGGS. Residues I194 and 199–201 each bind uracil; that span reads GDA. Residue D200 participates in 5-phospho-alpha-D-ribose 1-diphosphate binding.

This sequence belongs to the UPRTase family. Mg(2+) is required as a cofactor.

It carries out the reaction UMP + diphosphate = 5-phospho-alpha-D-ribose 1-diphosphate + uracil. It functions in the pathway pyrimidine metabolism; UMP biosynthesis via salvage pathway; UMP from uracil: step 1/1. Allosterically activated by GTP. Its function is as follows. Catalyzes the conversion of uracil and 5-phospho-alpha-D-ribose 1-diphosphate (PRPP) to UMP and diphosphate. The sequence is that of Uracil phosphoribosyltransferase from Desulfitobacterium hafniense (strain DSM 10664 / DCB-2).